The chain runs to 370 residues: Popeye domain-containing 2 (370 aa).

The next 2 membrane-spanning stretches (helical) occupy residues 51–71 and 78–98; these read ALYI…WGWL and VFIW…HLIF. The disordered stretch occupies residues 275–349; it reads PSPPGSEGGS…SGEDSTSLIL (75 aa). Low complexity predominate over residues 283–294; that stretch reads GSASSPPRGSLG. Composition is skewed to polar residues over residues 307-319 and 330-347; these read NPGS…QPDQ and QHWS…STSL.

It belongs to the popeye family. In terms of tissue distribution, expressed in the heart and, slightly, in skeletal muscle.

Its subcellular location is the membrane. It is found in the cell membrane. It localises to the sarcolemma. Important for striated muscle differentiation and cardiac morphogenesis. Is also required for cardiac conduction system development, plays a regulatory function in heart rate dynamics mediated, at least in part, through cAMP-binding. This is Popeye domain-containing 2 from Danio rerio (Zebrafish).